A 131-amino-acid chain; its full sequence is Small ribosomal subunit protein uS8 (131 aa).

The protein belongs to the universal ribosomal protein uS8 family. Part of the 30S ribosomal subunit. Contacts proteins S5 and S12.

In terms of biological role, one of the primary rRNA binding proteins, it binds directly to 16S rRNA central domain where it helps coordinate assembly of the platform of the 30S subunit. The chain is Small ribosomal subunit protein uS8 from Rhizorhabdus wittichii (strain DSM 6014 / CCUG 31198 / JCM 15750 / NBRC 105917 / EY 4224 / RW1) (Sphingomonas wittichii).